We begin with the raw amino-acid sequence, 20 residues long: TVIDVKCTSPKQCLPPCAKQ.

It belongs to the short scorpion toxin superfamily. Potassium channel inhibitor family. Alpha-KTx 02 subfamily. As to expression, expressed by the venom gland.

The protein localises to the secreted. Functionally, potent selective inhibitor of Kv1/KCNA voltage-gated potassium channels. In Centruroides limbatus (Bark scorpion), this protein is Hongotoxin-5.